Reading from the N-terminus, the 299-residue chain is Protease HtpX homolog (299 aa).

The next 2 helical transmembrane spans lie at 19 to 39 and 41 to 61; these read LFIV…VWYF and WGLT…WIAY. His-146 serves as a coordination point for Zn(2+). Residue Glu-147 is part of the active site. His-150 contributes to the Zn(2+) binding site. Transmembrane regions (helical) follow at residues 156-176 and 198-218; these read ILLM…RDVM and IILL…VLII. Glu-227 contacts Zn(2+).

Belongs to the peptidase M48B family. Zn(2+) is required as a cofactor.

Its subcellular location is the cell membrane. In Thermoanaerobacter pseudethanolicus (strain ATCC 33223 / 39E) (Clostridium thermohydrosulfuricum), this protein is Protease HtpX homolog.